The chain runs to 544 residues: Secreted aspartic protease 9 (544 aa).

The signal sequence occupies residues 1–17 (MRLNSVALLSLVATALA). The interval 31 to 50 (GESKDDLSPEDDSNPRFVKR) is disordered. In terms of domain architecture, Peptidase A1 spans 65-479 (YMATLKIGSN…DLDDYEVSLA (415 aa)). Position 83-85 (83-85 (DTG)) interacts with pepstatin A. A disulfide bond links cysteine 98 and cysteine 195. The active site involves threonine 167. N-linked (GlcNAc...) asparagine glycosylation is found at asparagine 212, asparagine 240, and asparagine 252. Aspartate 371 is an active-site residue. 371-375 (DTGST) is a binding site for pepstatin A. Cysteine 406 and cysteine 441 are oxidised to a cystine. N-linked (GlcNAc...) asparagine glycosylation is found at asparagine 422 and asparagine 499. A disordered region spans residues 500–520 (SSGSGTTSSSGTSTSTSTRHS).

Belongs to the peptidase A1 family. In terms of assembly, monomer. In terms of processing, the GPI-anchor is attached to the protein in the endoplasmic reticulum and serves to target the protein to the cell surface. There, the glucosamine-inositol phospholipid moiety is cleaved off and the GPI-modified mannoprotein is covalently attached via its lipidless GPI glycan remnant to the 1,6-beta-glucan of the outer cell wall layer.

It is found in the cell membrane. The protein resides in the secreted. Its subcellular location is the cell wall. It carries out the reaction Preferential cleavage at the carboxyl of hydrophobic amino acids, but fails to cleave 15-Leu-|-Tyr-16, 16-Tyr-|-Leu-17 and 24-Phe-|-Phe-25 of insulin B chain. Activates trypsinogen, and degrades keratin.. Secreted aspartic peptidases (SAPs) are a group of ten acidic hydrolases considered as key virulence factors. These enzymes supply the fungus with nutrient amino acids as well as are able to degrade the selected host's proteins involved in the immune defense. Moreover, acts toward human hemoglobin though limited proteolysis to generate a variety of antimicrobial hemocidins, enabling to compete with the other microorganisms of the same physiological niche using the microbicidal peptides generated from the host protein. In terms of biological role, plays a key role in defense against host by cleaving histatin-5 (Hst 5), a peptide from human saliva that carries out fungicidal activity. The cleavage rate decreases in an order of SAP2 &gt; SAP9 &gt; SAP3 &gt; SAP7 &gt; SAP4 &gt; SAP1 &gt; SAP8. The first cleavage occurs between residues 'Lys-17' and 'His-18' of Hst 5, giving DSHAKRHHGYKRKFHEK and HHSHRGY peptides. Simultaneously, the DSHAKRHHGYKRK peptide is also formed. Further fragmentation by SAP9 results in FHEK product. The protein is Secreted aspartic protease 9 of Candida albicans (Yeast).